The following is a 156-amino-acid chain: 3-hydroxyacyl-[acyl-carrier-protein] dehydratase FabZ (156 aa).

Residue histidine 62 is part of the active site.

The protein belongs to the thioester dehydratase family. FabZ subfamily.

Its subcellular location is the cytoplasm. It carries out the reaction a (3R)-hydroxyacyl-[ACP] = a (2E)-enoyl-[ACP] + H2O. Involved in unsaturated fatty acids biosynthesis. Catalyzes the dehydration of short chain beta-hydroxyacyl-ACPs and long chain saturated and unsaturated beta-hydroxyacyl-ACPs. The sequence is that of 3-hydroxyacyl-[acyl-carrier-protein] dehydratase FabZ from Parasynechococcus marenigrum (strain WH8102).